The sequence spans 203 residues: MSDDSSSPLTTLKILIIGESGVGKSSLMLRFVDDVFDPEQAATIGVDFRVTSMAIDGNRVKLAIWDTAGQERFRTLTPSYYRGAQGVICVYDVTSRSSFEKLNHWMQEVDTYCTNDNIIKMMVANKIDMPNRVVTREEGLKFAKRHRTLFIEASAKTKEGVQCTFEELIEKIIQTPDLWDNDRPSFRLGQPTGSSGGGGMCGC.

The GTP site is built by serine 20, glycine 23, lysine 24, serine 25, serine 26, aspartate 37, proline 38, threonine 43, glycine 69, lysine 126, aspartate 128, and alanine 155. An Effector region motif is present at residues 40–48; sequence QAATIGVDF. Residues cysteine 201 and cysteine 203 are each lipidated (S-geranylgeranyl cysteine). The residue at position 203 (cysteine 203) is a Cysteine methyl ester.

It belongs to the small GTPase superfamily. Rab family.

It catalyses the reaction GTP + H2O = GDP + phosphate + H(+). The small GTPases Rab are key regulators of intracellular membrane trafficking, from the formation of transport vesicles to their fusion with membranes. Rabs cycle between an inactive GDP-bound form and an active GTP-bound form that is able to recruit to membranes different sets of downstream effectors directly responsible for vesicle formation, movement, tethering and fusion. Plays a role in apical endocytosis/recycling. May be implicated in transport between the plasma membrane and early endosomes. Plays a role in the shedding of pathogen spores from intestinal cells. This Caenorhabditis elegans protein is Ras-related protein Rab-18 (rab-18).